The following is a 256-amino-acid chain: uncharacterized protein (256 aa).

Disordered regions lie at residues 1–38 (MGKT…PNRD) and 51–75 (PRPS…RCPQ).

This is an uncharacterized protein from Homo sapiens (Human).